Reading from the N-terminus, the 154-residue chain is Large ribosomal subunit protein uL13 (154 aa).

This sequence belongs to the universal ribosomal protein uL13 family. As to quaternary structure, part of the 50S ribosomal subunit.

Its function is as follows. This protein is one of the early assembly proteins of the 50S ribosomal subunit, although it is not seen to bind rRNA by itself. It is important during the early stages of 50S assembly. This chain is Large ribosomal subunit protein uL13, found in Bartonella henselae (strain ATCC 49882 / DSM 28221 / CCUG 30454 / Houston 1) (Rochalimaea henselae).